A 244-amino-acid polypeptide reads, in one-letter code: Probable transcriptional regulatory protein DMR_30850 (244 aa).

The protein belongs to the TACO1 family.

The protein localises to the cytoplasm. This Solidesulfovibrio magneticus (strain ATCC 700980 / DSM 13731 / RS-1) (Desulfovibrio magneticus) protein is Probable transcriptional regulatory protein DMR_30850.